The primary structure comprises 426 residues: Dihydroorotase (426 aa).

Zn(2+)-binding residues include histidine 55 and histidine 57. Substrate contacts are provided by residues 57–59 (HLR) and asparagine 89. Residues aspartate 147, histidine 174, histidine 233, and aspartate 306 each contribute to the Zn(2+) site. Residue aspartate 306 is part of the active site. Substrate contacts are provided by residues histidine 310 and 324-325 (FG).

Belongs to the metallo-dependent hydrolases superfamily. DHOase family. Class I DHOase subfamily. Zn(2+) serves as cofactor.

It catalyses the reaction (S)-dihydroorotate + H2O = N-carbamoyl-L-aspartate + H(+). The protein operates within pyrimidine metabolism; UMP biosynthesis via de novo pathway; (S)-dihydroorotate from bicarbonate: step 3/3. In terms of biological role, catalyzes the reversible cyclization of carbamoyl aspartate to dihydroorotate. The polypeptide is Dihydroorotase (Thermus aquaticus).